Consider the following 534-residue polypeptide: Acetyltransferase MATC1 (534 aa).

Catalysis depends on proton acceptor residues His186 and Asp459.

Belongs to the plant acyltransferase family.

It localises to the cell membrane. Its pathway is secondary metabolite biosynthesis. Its function is as follows. Acetyltransferase; part of the gene cluster that mediates the biosynthesis of mannosylerythritol lipids (MELs), surface-active substances that enhance the availability of water-insoluble substrates. Mannosylerythritol lipid production is responsible for hemolytic activity of Ustilago maydis. Depending on the number of acetyl groups, mannosylerythritol lipids can be differentiated into MEL A (fully acetylated), MEL B and MEL C (monoacetylated at R-6 and R-4, respectively), and the fully deacetylated MEL D. The first step in the pathway is the generation of mannosylerythritol by the glycosyltransferase EMT1 which catalyzes the transfer of GDP-mannose to the C-4 atom of meso-erythritol. This reaction has to be stereospecific, since only mannosyl-D-erythritol is generated. The produced disaccharide is subsequently acylated with fatty acids of various lengths derived from the peroxisomal beta-oxidation by the peroxisomal acyltransferases MAC1 and MAC2 at positions C-2 and C-3, repectively. The existence of MEL derivatives which carry an acetyl group at C-2 implies that at least MAC1 also accepts acetyl-CoA as a donor. The final step of MEL biosynthesis is the acetylation of the fully acylated mannosylerythritol lipids catalyzed by the acetyl-CoA-dependent acetyltransferase MAT1. MAT1 displays a relaxed regioselectivity and is able to transfer acetylgroups to both positions C-4 and C-6 of the mannosyl moiety. The sequence is that of Acetyltransferase MATC1 from Mycosarcoma maydis (Corn smut fungus).